The sequence spans 301 residues: CPX chromosomal region candidate gene 1 protein (301 aa).

The tract at residues 1-77 is disordered; that stretch reads MSYPTKEGSD…ENSELETEIQ (77 aa). Polar residues predominate over residues 44-60; it reads VETNPINREPGTATSQE.

Expressed in a variety of fetal tissues.

In Homo sapiens (Human), this protein is CPX chromosomal region candidate gene 1 protein (CPXCR1).